The primary structure comprises 753 residues: LIM domain and actin-binding protein 1 (753 aa).

Met-1 is modified (N-acetylmethionine). Ser-15 is subject to Phosphoserine. Over residues Glu-46–Asn-56 the composition is skewed to basic and acidic residues. Disordered regions lie at residues Glu-46–Arg-66 and Gly-82–Lys-186. The residue at position 132 (Ser-132) is a Phosphoserine. Positions Pro-143–Lys-152 are enriched in basic and acidic residues. Positions Cys-164–Gly-166 match the Required for interaction with NPC1L1 motif. The segment covering Asp-167–Thr-177 has biased composition (basic and acidic residues). A phosphoserine mark is found at Ser-225, Ser-230, Ser-242, and Ser-263. Disordered stretches follow at residues Ala-276–Thr-326 and Thr-341–Lys-379. The span at Val-278–Leu-291 shows a compositional bias: polar residues. Positions Lys-292 to Glu-305 are enriched in basic and acidic residues. Residues Cys-342–Gln-351 show a composition bias toward polar residues. Phosphoserine occurs at positions 348, 360, 367, and 372. Residues Ala-363–Lys-375 show a composition bias toward polar residues. In terms of domain architecture, LIM zinc-binding spans Glu-386–Ser-446. Lys-437 carries the post-translational modification N6-succinyllysine. Residues Ser-467, Ser-485, and Ser-488 each carry the phosphoserine modification. Disordered regions lie at residues Ser-467–Asp-493, Ser-505–Glu-669, and Glu-682–Gly-703. Residues Val-491–Ser-511 form a required for interaction with MYO5B region. 2 stretches are compositionally biased toward basic and acidic residues: residues Ser-512–Lys-525 and Trp-554–Ala-565. Residues Ser-598–Ser-609 show a composition bias toward low complexity. 4 positions are modified to phosphoserine: Ser-599, Ser-602, Ser-607, and Ser-615. A compositionally biased stretch (basic and acidic residues) spans Met-630 to Phe-666. 3 positions are modified to phosphoserine: Ser-692, Ser-720, and Ser-735.

As to quaternary structure, interacts with NPC1L1; bridges NPC1L1 with MYO5B. Interacts with MYO5B; bridges MYO5B with NPC1L1. Interacts with PXN; this complex stabilizes actin dynamics. Binds to G-actin and F-actin. Interacts with LUZP1 (via C-terminus); both proteins restrict ciliation and may work together to regulate this process. Binds RAB40B (GTP-bound); interaction influences LIMA1 subcellular localization in lamellipodia during cell migration. In terms of processing, phosphorylation of the C-terminal region by MAPK1/MAPK3 reduces its association with F-actin and contributes to actin filament reorganization and enhances cell motility. Ubiquitinated by the ECS(RAB40B) complex leading to its degradation. In terms of tissue distribution, highly expressed in the small intestine, including the duodenum, jejunum, and ileum. Low expression in the liver and very low expressed in the heart, spleen, lung, brain, and pancreas. Isoform Alpha is highly expressed in embryos from day 7-11 and in adult spleen and lung. Isoform Beta expression is highest in adult kidney, testis, lung and liver, intermediate in heart, brain, spleen, skeletal muscle and low in embryos.

The protein localises to the cytoplasm. The protein resides in the cell junction. It is found in the focal adhesion. Its subcellular location is the cytoskeleton. It localises to the stress fiber. The protein localises to the cell membrane. The protein resides in the cell projection. It is found in the ruffle. Its subcellular location is the lamellipodium. Functionally, actin-binding protein involved in actin cytoskeleton regulation and dynamics. Increases the number and size of actin stress fibers and inhibits membrane ruffling. Inhibits actin filament depolymerization. Bundles actin filaments, delays filament nucleation and reduces formation of branched filaments. Acts as a negative regulator of primary cilium formation. Plays a role in cholesterol homeostasis. Influences plasma cholesterol levels through regulation of intestinal cholesterol absorption. May act as a scaffold protein by regulating NPC1L1 transportation, an essential protein for cholesterol absorption, to the plasma membrane by recruiting MYO5B to NPC1L1, and thus facilitates cholesterol uptake. This Mus musculus (Mouse) protein is LIM domain and actin-binding protein 1 (Lima1).